The sequence spans 1337 residues: Zinc finger protein 335 (1337 aa).

2 disordered regions span residues 1 to 108 and 198 to 226; these read MEEN…LVHS and GPTS…PPAP. 2 stretches are compositionally biased toward low complexity: residues 31–45 and 54–63; these read TSEA…AATV and SGVGQSSDGG. A C2H2-type 1 zinc finger spans residues 248-271; sequence FKCKMCQYRSSTKATLLRHMRERH. The tract at residues 278–444 is disordered; the sequence is AAAAATGKRG…PPRRRGRPSR (167 aa). Residues 302-332 show a composition bias toward acidic residues; the sequence is DRPEEEEEDDDIVDAGAIDDLEEDSDYNPAE. Residues 351–362 show a composition bias toward basic residues; sequence RPRRRPGRPRKL. A compositionally biased stretch (basic and acidic residues) spans 363 to 372; sequence PRLETSDLHD. Residues 378–388 show a composition bias toward polar residues; sequence LVSSQSTQSPP. C2H2-type zinc fingers lie at residues 466 to 488, 496 to 518, 524 to 546, 563 to 585, 591 to 613, 622 to 644, 650 to 673, and 679 to 702; these read YLCR…VNSH, FRCL…MFNH, YKCD…AAVH, FPCP…MKTH, HMCD…LLTH, FKCE…QLSH, FKCS…AVKH, and FACE…RCRH. Disordered regions lie at residues 733-767 and 963-999; these read LKQQ…TPPL and QCGG…ASHT. Residues 741-756 are compositionally biased toward pro residues; sequence PGPPLSSPGPEAPQEP. Residues S976 and S1007 each carry the phosphoserine modification. 4 C2H2-type zinc fingers span residues 1019 to 1041, 1047 to 1069, 1075 to 1097, and 1103 to 1126; these read FSCK…KRAH, FKCP…MAQH, HQCN…MLTH, and FSCH…QRLH. K1022 participates in a covalent cross-link: Glycyl lysine isopeptide (Lys-Gly) (interchain with G-Cter in SUMO2). The residue at position 1149 (S1149) is a Phosphoserine.

It belongs to the krueppel C2H2-type zinc-finger protein family. As to quaternary structure, interacts with NCOA6; may enhance ligand-dependent transcriptional activation by nuclear hormone receptors. Interacts with CNOT6. Interacts with CNOT9; the interaction is direct. Component of a nuclear receptor-mediated transcription complex composed of at least ZNF335, CCAR2 and EMSY; the complex stimulates the transcription of nuclear receptor target genes such as SOX9 and HOXA1. Within the complex interacts with EMSY and interacts (via C-terminus) with CCAR2. Interacts with members of histone H3'Lys4'(H3K4) methyltransferase complexes ASH2L, CXXC1, KMT2A/MLL1, RBBP5, SETD1A and WDR5. Component of a histone methylation complex composed of at least ZNF335, RBBP5, ASH2L and WDR5; the complex may have histone H3-specific methyltransferase activity, however does not have specificity for 'Lys-4' of histone H3. Interacts with RBBP5 and WDR5. Interacts with ASHL2. Components of this complex may associate with components of the ZNF335-CCAR2-EMSY nuclear receptor-mediated transcription complex to form a complex at least composed of ZNF335, HCFC1, CCAR2, EMSY, MKI67, RBBP5, ASH2L and WDR5. Within this complex also interacts with HCFC1 and MKI67. As to expression, expressed at low levels in cerebral cortex, hippocampus and cerebellum (at protein level).

Its subcellular location is the nucleus. Its function is as follows. Component or associated component of some histone methyltransferase complexes may regulate transcription through recruitment of those complexes on gene promoters. Enhances ligand-dependent transcriptional activation by nuclear hormone receptors. Plays an important role in neural progenitor cell proliferation and self-renewal through the regulation of specific genes involved brain development, including REST. Also controls the expression of genes involved in somatic development and regulates, for instance, lymphoblast proliferation. The protein is Zinc finger protein 335 (Znf335) of Mus musculus (Mouse).